Reading from the N-terminus, the 704-residue chain is Preterpestacin I synthase tpcA (704 aa).

The segment at 1 to 329 is terpene cyclase; it reads MEQLSYQSKL…CSACPRQNAW (329 aa). Aspartate 96 provides a ligand contact to Mg(2+). Residues aspartate 96, asparagine 231, 235-239, and 325-326 contribute to the substrate site; these read SWERE and RQ. The DDXXD 1 motif lies at 96 to 100; the sequence is DDGGE. The short motif at 231–239 is the NSE/DTE element; it reads NDYFSWERE. The segment at 330-688 is prenyltransferase; it reads KDMSSQSLNG…MLRLCLAKLS (359 aa). The segment at 361-380 is disordered; it reads KDSSFFGSQPSDDEPSLSEV. The isopentenyl diphosphate site is built by lysine 406, arginine 409, and histidine 438. Mg(2+)-binding residues include aspartate 445 and aspartate 449. A DDXXD 2 motif is present at residues 445–449; it reads DDLED. Arginine 454 is a dimethylallyl diphosphate binding site. Isopentenyl diphosphate is bound at residue arginine 455. Dimethylallyl diphosphate contacts are provided by lysine 532, threonine 533, glutamine 568, asparagine 575, lysine 583, and lysine 593.

The protein in the N-terminal section; belongs to the terpene synthase family. It in the C-terminal section; belongs to the FPP/GGPP synthase family. Hexamer. The cofactor is Mg(2+).

It catalyses the reaction isopentenyl diphosphate + (2E,6E)-farnesyl diphosphate = (2E,6E,10E)-geranylgeranyl diphosphate + diphosphate. The catalysed reaction is isopentenyl diphosphate + (2E,6E,10E)-geranylgeranyl diphosphate = (2E,6E,10E,14E)-geranylfarnesyl diphosphate + diphosphate. It functions in the pathway secondary metabolite biosynthesis; terpenoid biosynthesis. Bifunctional terpene synthase; part of the gene cluster that mediates the biosynthesis of terpestacin. The bifunctional terpene synthase tpcA converts isopentenyl diphosphate (IPP) and dimethylallyl diphosphate (DMAPP) into the sesterterpene preterpestacin I. The C-terminal prenyltransferase (PT) domain of tpcA catalyzes formation of GFPP, whereas the N-terminal terpene cyclase (TC) domain catalyzes the cyclization of GFPP into preterpestacin I. The cytochrome P450 monooxygenase tpcB then hydroxylates preterpestacin I to yield 24-hydroxypreterpstacin I (renamed as preterpestacin II) whereas the cytochrome P450 monooxygenase tpcC further hydroxylates preterpestacin II to yield 16,17-dihydroxypreterpestacin II (renamed as preterpestacin III). Finally, the FAD-dependent monooxygenase tpcD converts preterpestacin III into terpestacin. This chain is Preterpestacin I synthase tpcA, found in Cochliobolus heterostrophus (strain C5 / ATCC 48332 / race O) (Southern corn leaf blight fungus).